An 89-amino-acid polypeptide reads, in one-letter code: Small ribosomal subunit protein uS15 (89 aa).

The protein belongs to the universal ribosomal protein uS15 family. In terms of assembly, part of the 30S ribosomal subunit. Forms a bridge to the 50S subunit in the 70S ribosome, contacting the 23S rRNA.

Its function is as follows. One of the primary rRNA binding proteins, it binds directly to 16S rRNA where it helps nucleate assembly of the platform of the 30S subunit by binding and bridging several RNA helices of the 16S rRNA. Functionally, forms an intersubunit bridge (bridge B4) with the 23S rRNA of the 50S subunit in the ribosome. The sequence is that of Small ribosomal subunit protein uS15 from Azorhizobium caulinodans (strain ATCC 43989 / DSM 5975 / JCM 20966 / LMG 6465 / NBRC 14845 / NCIMB 13405 / ORS 571).